Here is a 551-residue protein sequence, read N- to C-terminus: Chaperonin GroEL (551 aa).

ATP contacts are provided by residues 30–33 (TLGP), lysine 51, 87–91 (DGTTT), glycine 415, 479–481 (NAA), and aspartate 495. Residues 523–551 (DSPKEDKSSDMPSPSAGGMGGMGGMGGMM) are disordered. The span at 539 to 551 (GGMGGMGGMGGMM) shows a compositional bias: gly residues.

The protein belongs to the chaperonin (HSP60) family. In terms of assembly, forms a cylinder of 14 subunits composed of two heptameric rings stacked back-to-back. Interacts with the co-chaperonin GroES.

Its subcellular location is the cytoplasm. The catalysed reaction is ATP + H2O + a folded polypeptide = ADP + phosphate + an unfolded polypeptide.. In terms of biological role, together with its co-chaperonin GroES, plays an essential role in assisting protein folding. The GroEL-GroES system forms a nano-cage that allows encapsulation of the non-native substrate proteins and provides a physical environment optimized to promote and accelerate protein folding. This is Chaperonin GroEL from Buchnera aphidicola subsp. Chaetophorus leucomelas.